A 456-amino-acid chain; its full sequence is Glutamate--tRNA ligase 2 (456 aa).

The short motif at 8 to 18 (PSPTGYIHIGN) is the 'HIGH' region element. A 'KMSKS' region motif is present at residues 249–253 (GLSKR). Residue K252 participates in ATP binding.

Belongs to the class-I aminoacyl-tRNA synthetase family. Glutamate--tRNA ligase type 1 subfamily. In terms of assembly, monomer.

It localises to the cytoplasm. It carries out the reaction tRNA(Glu) + L-glutamate + ATP = L-glutamyl-tRNA(Glu) + AMP + diphosphate. Functionally, catalyzes the attachment of glutamate to tRNA(Glu) in a two-step reaction: glutamate is first activated by ATP to form Glu-AMP and then transferred to the acceptor end of tRNA(Glu). This Bartonella bacilliformis (strain ATCC 35685 / KC583 / Herrer 020/F12,63) protein is Glutamate--tRNA ligase 2.